The primary structure comprises 74 residues: Hadrucalcin (74 aa).

The first 27 residues, 1–27 (MKTSSLTIIFIAVIITIICLNIHDIEA), serve as a signal peptide directing secretion. The propeptide occupies 28 to 39 (REIEFNAGRVVR). Disulfide bonds link Cys44/Cys58, Cys51/Cys62, and Cys57/Cys73. Positions 64-65 (RR) are essential for stimulation of [3H]ryanodine binding to RYR1.

In terms of tissue distribution, expressed by the venom gland.

It localises to the secreted. In terms of biological role, this toxin activates ryanodine receptors RyR1 and RyR2 by inducing a long-lasting subconductance state (35% of the full conductance stateon RyR1). Furthermore, it triggers calcium release from sarcoplasmic vesicles (11.8 nM are enough to induce a sharp release on RyR1, and 55% of the total calcium is released after toxin (100 nM) addition on RyR1) probably by acting as a cell-penetrating peptide (CPP). In addition, it has been shown to dose-dependently stimulate ryanodine binding to RyR1 (EC(50)=14.8 nM). It also augments the bell-shaped calcium-[3H]ryanodine binding curve that is maximal at about 10 uM calcium concentration. It binds a different site as ryanodine. It acts synergistically with caffeine. In vivo, intracerebroventricular injection into mice induces neurotoxic symptoms, followed by death. The polypeptide is Hadrucalcin (Hoffmannihadrurus gertschi (Scorpion)).